A 370-amino-acid polypeptide reads, in one-letter code: Germination protease (370 aa).

Positions 1-15 (MEKELDLSQYSVRTD) are excised as a propeptide.

It belongs to the peptidase A25 family. As to quaternary structure, homotetramer. Post-translationally, autoproteolytically processed. The inactive tetrameric zymogen termed p46 autoprocesses to a smaller form termed p41, which is active only during spore germination.

It catalyses the reaction Endopeptidase action with P4 Glu or Asp, P1 preferably Glu &gt; Asp, P1' hydrophobic and P2' Ala.. Functionally, initiates the rapid degradation of small, acid-soluble proteins during spore germination. The chain is Germination protease (gpr) from Priestia megaterium (strain ATCC 12872 / QMB1551) (Bacillus megaterium).